A 294-amino-acid polypeptide reads, in one-letter code: Signal peptidase I (294 aa).

The segment at 1-59 is disordered; it reads MTETTDSPSERQPGPAEPELSSRDPDIAGQVFDAAPFDAAPDADSEGDSKAAKTDEPRP. Residues 1–66 are Cytoplasmic-facing; that stretch reads MTETTDSPSE…PRPAKRSTLR (66 aa). The span at 47-59 shows a compositional bias: basic and acidic residues; it reads GDSKAAKTDEPRP. A helical membrane pass occupies residues 67–87; the sequence is EFAVLAVIAVVLYYVMLTFVA. Residues 88–294 are Extracellular-facing; the sequence is RPYLIPSESM…VRSVNPQQGR (207 aa). Active-site residues include S96 and K174.

The protein belongs to the peptidase S26 family.

The protein resides in the cell membrane. It carries out the reaction Cleavage of hydrophobic, N-terminal signal or leader sequences from secreted and periplasmic proteins.. The polypeptide is Signal peptidase I (lepB) (Mycobacterium tuberculosis (strain CDC 1551 / Oshkosh)).